The sequence spans 663 residues: Transketolase 2 (663 aa).

Position 25 (His-25) interacts with substrate. Residues His-65 and 113-115 (GPL) contribute to the thiamine diphosphate site. Asp-154 is a Mg(2+) binding site. Gly-155 and Asn-184 together coordinate thiamine diphosphate. Mg(2+)-binding residues include Asn-184 and Ile-186. Residues His-259, Arg-356, and Ser-383 each contribute to the substrate site. Residue His-259 participates in thiamine diphosphate binding. Glu-410 serves as the catalytic Proton donor. A thiamine diphosphate-binding site is contributed by Phe-436. Substrate is bound by residues His-460, Asp-468, and Arg-519.

This sequence belongs to the transketolase family. In terms of assembly, homodimer. Requires Mg(2+) as cofactor. Ca(2+) serves as cofactor. The cofactor is Mn(2+). It depends on Co(2+) as a cofactor. Thiamine diphosphate is required as a cofactor.

It carries out the reaction D-sedoheptulose 7-phosphate + D-glyceraldehyde 3-phosphate = aldehydo-D-ribose 5-phosphate + D-xylulose 5-phosphate. Functionally, catalyzes the transfer of a two-carbon ketol group from a ketose donor to an aldose acceptor, via a covalent intermediate with the cofactor thiamine pyrophosphate. This Vibrio parahaemolyticus serotype O3:K6 (strain RIMD 2210633) protein is Transketolase 2 (tkt2).